Reading from the N-terminus, the 501-residue chain is L-ornithine N(5)-monooxygenase (501 aa).

Over residues 1-16 (MNGTSTTGNGFTNGTN) the composition is skewed to low complexity. The interval 1-40 (MNGTSTTGNGFTNGTNYPVPKLELQPETTSTSPTRAQTHP) is disordered. Positions 26 to 37 (PETTSTSPTRAQ) are enriched in polar residues. Residues 92 to 100 (EKQSNFAWH) and Q111 contribute to the FAD site. K116 lines the substrate pocket. V177 is an FAD binding site. 263-266 (SGQS) serves as a coordination point for NADP(+). Residues 304 to 307 (NELF) and N334 each bind substrate. Residue 334 to 336 (NYS) participates in NADP(+) binding. 476–478 (SLL) is a binding site for FAD. S479 provides a ligand contact to substrate.

The protein belongs to the lysine N(6)-hydroxylase/L-ornithine N(5)-oxygenase family. In terms of assembly, homotetramer. It depends on FAD as a cofactor.

The enzyme catalyses L-ornithine + NADPH + O2 = N(5)-hydroxy-L-ornithine + NADP(+) + H2O. It carries out the reaction L-ornithine + NADH + O2 = N(5)-hydroxy-L-ornithine + NAD(+) + H2O. It functions in the pathway siderophore biosynthesis. In terms of biological role, L-ornithine N(5)-monooxygenase; part of the siderophore biosynthetic pathway. Arthroderma benhamiae produces 2 types of extracellular siderophores, ferrichrome C and ferricrocin. The biosynthesis of these siderophores depends on the hydroxylation of ornithine to N(5)-hydroxyornithine, catalyzed by the monooxygenase sidA. The structure of ferricrocin differs from ferrichrome C only by a serine for alanine substitution and the assembly of both siderophores is suggested to be performed by the nonribosomal peptide synthase (NRPS) sidC. The protein is L-ornithine N(5)-monooxygenase of Arthroderma benhamiae (strain ATCC MYA-4681 / CBS 112371) (Trichophyton mentagrophytes).